The sequence spans 444 residues: Flagellum-specific ATP synthase (444 aa).

Residue 164-171 (AGSGVGKS) coordinates ATP.

It belongs to the ATPase alpha/beta chains family.

It is found in the cytoplasm. It carries out the reaction ATP + H2O + 4 H(+)(in) = ADP + phosphate + 5 H(+)(out). In terms of biological role, probable catalytic subunit of a protein translocase for flagellum-specific export, or a proton translocase involved in local circuits at the flagellum. This chain is Flagellum-specific ATP synthase (fliI), found in Caulobacter vibrioides (strain ATCC 19089 / CIP 103742 / CB 15) (Caulobacter crescentus).